The primary structure comprises 348 residues: Dihydroorotase (348 aa).

Zn(2+)-binding residues include H17 and H19. Substrate contacts are provided by residues 19 to 21 (HLR) and N45. Zn(2+) is bound by residues K103, H140, and H178. K103 bears the N6-carboxylysine mark. Residue H140 participates in substrate binding. Residue L223 coordinates substrate. Zn(2+) is bound at residue D251. D251 is a catalytic residue. Substrate-binding residues include H255 and A267.

This sequence belongs to the metallo-dependent hydrolases superfamily. DHOase family. Class II DHOase subfamily. In terms of assembly, homodimer. Zn(2+) serves as cofactor.

It carries out the reaction (S)-dihydroorotate + H2O = N-carbamoyl-L-aspartate + H(+). It functions in the pathway pyrimidine metabolism; UMP biosynthesis via de novo pathway; (S)-dihydroorotate from bicarbonate: step 3/3. Its function is as follows. Catalyzes the reversible cyclization of carbamoyl aspartate to dihydroorotate. This Salmonella paratyphi C (strain RKS4594) protein is Dihydroorotase.